We begin with the raw amino-acid sequence, 275 residues long: Octanoyl-[GcvH]:protein N-octanoyltransferase (275 aa).

The 205-residue stretch at G42 to E246 folds into the BPL/LPL catalytic domain. The active-site Acyl-thioester intermediate is C145.

It belongs to the octanoyltransferase LipL family.

It carries out the reaction N(6)-octanoyl-L-lysyl-[glycine-cleavage complex H protein] + L-lysyl-[lipoyl-carrier protein] = N(6)-octanoyl-L-lysyl-[lipoyl-carrier protein] + L-lysyl-[glycine-cleavage complex H protein]. It participates in protein modification; protein lipoylation via endogenous pathway; protein N(6)-(lipoyl)lysine from octanoyl-[acyl-carrier-protein]. Its function is as follows. Catalyzes the amidotransfer (transamidation) of the octanoyl moiety from octanoyl-GcvH to the lipoyl domain of the E2 subunit of lipoate-dependent enzymes. The sequence is that of Octanoyl-[GcvH]:protein N-octanoyltransferase from Anoxybacillus flavithermus (strain DSM 21510 / WK1).